The primary structure comprises 130 residues: Large ribosomal subunit protein bL19 (130 aa).

This sequence belongs to the bacterial ribosomal protein bL19 family.

Its function is as follows. This protein is located at the 30S-50S ribosomal subunit interface and may play a role in the structure and function of the aminoacyl-tRNA binding site. This chain is Large ribosomal subunit protein bL19, found in Psychrobacter arcticus (strain DSM 17307 / VKM B-2377 / 273-4).